A 1010-amino-acid polypeptide reads, in one-letter code: Trifunctional purine biosynthetic protein adenosine-3 (1010 aa).

Ala-2 carries the N-acetylalanine modification. Residues Lys-111 to Asp-318 form the ATP-grasp domain. ATP is bound by residues Glu-190 to Leu-193, Glu-197, Arg-220, and Asn-229. 2 residues coordinate Mg(2+): Glu-288 and Asn-290. Lys-350 carries the post-translational modification N6-acetyllysine. The segment at Gly-434–Arg-809 is AIRS domain. Ser-440 is modified (phosphoserine). Thr-682 carries the post-translational modification Phosphothreonine. Position 802 is a phosphoserine (Ser-802). The tract at residues Val-810–Asp-1010 is GART domain. Gly-818–Asn-820 serves as a coordination point for N(1)-(5-phospho-beta-D-ribosyl)glycinamide. (6R)-10-formyltetrahydrofolate-binding positions include Arg-871, Met-896–Leu-899, and Asn-913. The active-site Proton donor is the His-915. Ala-947–Asp-951 contacts (6R)-10-formyltetrahydrofolate. Lys-977–Glu-980 contributes to the N(1)-(5-phospho-beta-D-ribosyl)glycinamide binding site.

This sequence in the N-terminal section; belongs to the GARS family. The protein in the central section; belongs to the AIR synthase family. In the C-terminal section; belongs to the GART family. In terms of assembly, homodimer. Requires Mg(2+) as cofactor. The cofactor is Mn(2+).

It catalyses the reaction 5-phospho-beta-D-ribosylamine + glycine + ATP = N(1)-(5-phospho-beta-D-ribosyl)glycinamide + ADP + phosphate + H(+). The catalysed reaction is 2-formamido-N(1)-(5-O-phospho-beta-D-ribosyl)acetamidine + ATP = 5-amino-1-(5-phospho-beta-D-ribosyl)imidazole + ADP + phosphate + H(+). The enzyme catalyses N(1)-(5-phospho-beta-D-ribosyl)glycinamide + (6R)-10-formyltetrahydrofolate = N(2)-formyl-N(1)-(5-phospho-beta-D-ribosyl)glycinamide + (6S)-5,6,7,8-tetrahydrofolate + H(+). It participates in purine metabolism; IMP biosynthesis via de novo pathway; 5-amino-1-(5-phospho-D-ribosyl)imidazole from N(2)-formyl-N(1)-(5-phospho-D-ribosyl)glycinamide: step 2/2. The protein operates within purine metabolism; IMP biosynthesis via de novo pathway; N(1)-(5-phospho-D-ribosyl)glycinamide from 5-phospho-alpha-D-ribose 1-diphosphate: step 2/2. It functions in the pathway purine metabolism; IMP biosynthesis via de novo pathway; N(2)-formyl-N(1)-(5-phospho-D-ribosyl)glycinamide from N(1)-(5-phospho-D-ribosyl)glycinamide (10-formyl THF route): step 1/1. Trifunctional enzyme that catalyzes three distinct reactions as part of the 'de novo' inosine monophosphate biosynthetic pathway. This is Trifunctional purine biosynthetic protein adenosine-3 (GART) from Bos taurus (Bovine).